The primary structure comprises 174 residues: 3-hydroxydecanoyl-[acyl-carrier-protein] dehydratase (174 aa).

His-73 is an active-site residue.

Belongs to the thioester dehydratase family. FabA subfamily. Homodimer.

The protein resides in the cytoplasm. It carries out the reaction a (3R)-hydroxyacyl-[ACP] = a (2E)-enoyl-[ACP] + H2O. It catalyses the reaction (3R)-hydroxydecanoyl-[ACP] = (2E)-decenoyl-[ACP] + H2O. The catalysed reaction is (2E)-decenoyl-[ACP] = (3Z)-decenoyl-[ACP]. The protein operates within lipid metabolism; fatty acid biosynthesis. Functionally, necessary for the introduction of cis unsaturation into fatty acids. Catalyzes the dehydration of (3R)-3-hydroxydecanoyl-ACP to E-(2)-decenoyl-ACP and then its isomerization to Z-(3)-decenoyl-ACP. Can catalyze the dehydratase reaction for beta-hydroxyacyl-ACPs with saturated chain lengths up to 16:0, being most active on intermediate chain length. The protein is 3-hydroxydecanoyl-[acyl-carrier-protein] dehydratase of Cellvibrio japonicus (strain Ueda107) (Pseudomonas fluorescens subsp. cellulosa).